The primary structure comprises 59 residues: Large ribosomal subunit protein uL30 (59 aa).

The protein belongs to the universal ribosomal protein uL30 family. As to quaternary structure, part of the 50S ribosomal subunit.

This Enterobacter sp. (strain 638) protein is Large ribosomal subunit protein uL30.